The primary structure comprises 193 residues: Large ribosomal subunit protein uL11 (193 aa).

It belongs to the universal ribosomal protein uL11 family. In terms of assembly, part of the ribosomal stalk of the 50S ribosomal subunit. Interacts with L10 and the large rRNA to form the base of the stalk. L10 forms an elongated spine to which L12 dimers bind in a sequential fashion forming a multimeric L10(L12)X complex. In terms of processing, one or more lysine residues are methylated.

Functionally, forms part of the ribosomal stalk which helps the ribosome interact with GTP-bound translation factors. This is Large ribosomal subunit protein uL11 from Mycoplasmopsis synoviae (strain 53) (Mycoplasma synoviae).